Consider the following 352-residue polypeptide: AP2/ERF and B3 domain-containing transcription factor At1g51120 (352 aa).

The segment at 1–20 is disordered; it reads MDEMSNVAKTTTETSGLTDS. The span at 7–20 shows a compositional bias: polar residues; that stretch reads VAKTTTETSGLTDS. The AP2/ERF DNA-binding region spans 46 to 103; sequence KFKGVVQQQNGHWGAQIYADHRRIWLGTFKSAHEAAAAYDSASIKLRSFDANSHRNFP. The TF-B3 DNA-binding region spans 178–297; the sequence is FQKELTPSDV…KTFLMIDVHH (120 aa).

The protein belongs to the AP2/ERF transcription factor family. RAV subfamily.

Its subcellular location is the nucleus. In terms of biological role, probably acts as a transcriptional activator. Binds to the GCC-box pathogenesis-related promoter element. May be involved in the regulation of gene expression by stress factors and by components of stress signal transduction pathways. This Arabidopsis thaliana (Mouse-ear cress) protein is AP2/ERF and B3 domain-containing transcription factor At1g51120.